Consider the following 138-residue polypeptide: Large ribosomal subunit protein eL27 (138 aa).

Belongs to the eukaryotic ribosomal protein eL27 family.

The protein is Large ribosomal subunit protein eL27 (RPL27) of Solanum tuberosum (Potato).